The following is a 383-amino-acid chain: Probable disease resistance protein At4g19060 (383 aa).

A disordered region spans residues 36 to 84 (YEKWSSGKQRGSSSKHGNQSTHGDSSPTRNSSGSSKKGRPKANRVETSS). The span at 41-70 (SGKQRGSSSKHGNQSTHGDSSPTRNSSGSS) shows a compositional bias: polar residues. 2 NB-ARC domains span residues 75-184 (PKAN…MFKH) and 207-281 (VKEK…LAKA). 121-128 (GKYGVGKT) contacts ATP.

In terms of biological role, possible disease resistance protein. The protein is Probable disease resistance protein At4g19060 of Arabidopsis thaliana (Mouse-ear cress).